The following is a 300-amino-acid chain: 4-hydroxy-tetrahydrodipicolinate synthase (300 aa).

Position 45 (threonine 45) interacts with pyruvate. The Proton donor/acceptor role is filled by tyrosine 140. Lysine 169 functions as the Schiff-base intermediate with substrate in the catalytic mechanism. Isoleucine 210 contacts pyruvate.

It belongs to the DapA family. As to quaternary structure, homotetramer; dimer of dimers.

Its subcellular location is the cytoplasm. The catalysed reaction is L-aspartate 4-semialdehyde + pyruvate = (2S,4S)-4-hydroxy-2,3,4,5-tetrahydrodipicolinate + H2O + H(+). It functions in the pathway amino-acid biosynthesis; L-lysine biosynthesis via DAP pathway; (S)-tetrahydrodipicolinate from L-aspartate: step 3/4. Its function is as follows. Catalyzes the condensation of (S)-aspartate-beta-semialdehyde [(S)-ASA] and pyruvate to 4-hydroxy-tetrahydrodipicolinate (HTPA). This is 4-hydroxy-tetrahydrodipicolinate synthase from Helicobacter pylori (strain HPAG1).